Consider the following 239-residue polypeptide: Probable inner membrane transporter protein TsaS (239 aa).

A run of 4 helical transmembrane segments spans residues 65 to 85 (AIGA…WLMG), 128 to 148 (GLVG…IALL), 160 to 180 (ATVP…LFGA), and 186 to 206 (AHTF…VVLG).

It belongs to the 4-toluene sulfonate uptake permease (TSUP) (TC 2.A.102) family. As to quaternary structure, part of a two-component transport system composed of TsaT and TsaS.

The protein resides in the cell inner membrane. In terms of biological role, involved in the uptake of p-toluenesulphonate (TSA). The sequence is that of Probable inner membrane transporter protein TsaS (tsaS) from Comamonas testosteroni (Pseudomonas testosteroni).